A 367-amino-acid chain; its full sequence is Homoserine O-acetyltransferase (367 aa).

In terms of domain architecture, AB hydrolase-1 spans 44-350; it reads NVIMVEHAWT…AYGHDAFLLE (307 aa). Residue S150 is the Nucleophile of the active site. R217 serves as a coordination point for substrate. Residues D311 and H344 contribute to the active site. D345 contributes to the substrate binding site.

It belongs to the AB hydrolase superfamily. MetX family. As to quaternary structure, homodimer.

Its subcellular location is the cytoplasm. The enzyme catalyses L-homoserine + acetyl-CoA = O-acetyl-L-homoserine + CoA. It participates in amino-acid biosynthesis; L-methionine biosynthesis via de novo pathway; O-acetyl-L-homoserine from L-homoserine: step 1/1. Its function is as follows. Transfers an acetyl group from acetyl-CoA to L-homoserine, forming acetyl-L-homoserine. In vitro, can also use propionyl-CoA or butiryl-CoA as acyl donor. The chain is Homoserine O-acetyltransferase from Trichlorobacter lovleyi (strain ATCC BAA-1151 / DSM 17278 / SZ) (Geobacter lovleyi).